Consider the following 113-residue polypeptide: Nitrogenase-stabilizing/protective protein NifW (113 aa).

Belongs to the NifW family. As to quaternary structure, homotrimer; associates with NifD.

May protect the nitrogenase Fe-Mo protein from oxidative damage. This is Nitrogenase-stabilizing/protective protein NifW from Polaromonas naphthalenivorans (strain CJ2).